The following is a 105-amino-acid chain: Small ribosomal subunit protein uS10 (105 aa).

The protein belongs to the universal ribosomal protein uS10 family. Part of the 30S ribosomal subunit.

Involved in the binding of tRNA to the ribosomes. The sequence is that of Small ribosomal subunit protein uS10 from Trichodesmium erythraeum (strain IMS101).